We begin with the raw amino-acid sequence, 41 residues long: Cytochrome b559 subunit beta (41 aa).

Residues 16–32 traverse the membrane as a helical segment; the sequence is WLAVHALAIPTVFFLGS. Position 20 (histidine 20) interacts with heme.

It belongs to the PsbE/PsbF family. Heterodimer of an alpha subunit and a beta subunit. PSII is composed of 1 copy each of membrane proteins PsbA, PsbB, PsbC, PsbD, PsbE, PsbF, PsbH, PsbI, PsbJ, PsbK, PsbL, PsbM, PsbT, PsbY, PsbZ, Psb30/Ycf12, at least 3 peripheral proteins of the oxygen-evolving complex and a large number of cofactors. It forms dimeric complexes. Heme b serves as cofactor.

It localises to the plastid. The protein resides in the chloroplast thylakoid membrane. This b-type cytochrome is tightly associated with the reaction center of photosystem II (PSII). PSII is a light-driven water:plastoquinone oxidoreductase that uses light energy to abstract electrons from H(2)O, generating O(2) and a proton gradient subsequently used for ATP formation. It consists of a core antenna complex that captures photons, and an electron transfer chain that converts photonic excitation into a charge separation. The chain is Cytochrome b559 subunit beta from Euglena gracilis.